The following is a 314-amino-acid chain: Methionyl-tRNA formyltransferase (314 aa).

111 to 114 (SLLP) lines the (6S)-5,6,7,8-tetrahydrofolate pocket.

The protein belongs to the Fmt family.

The enzyme catalyses L-methionyl-tRNA(fMet) + (6R)-10-formyltetrahydrofolate = N-formyl-L-methionyl-tRNA(fMet) + (6S)-5,6,7,8-tetrahydrofolate + H(+). Functionally, attaches a formyl group to the free amino group of methionyl-tRNA(fMet). The formyl group appears to play a dual role in the initiator identity of N-formylmethionyl-tRNA by promoting its recognition by IF2 and preventing the misappropriation of this tRNA by the elongation apparatus. This chain is Methionyl-tRNA formyltransferase, found in Coxiella burnetii (strain CbuK_Q154) (Coxiella burnetii (strain Q154)).